The chain runs to 121 residues: Flagellar protein FliT (121 aa).

The interval methionine 1–leucine 50 is required for homodimerization. Positions methionine 60–valine 98 are fliD binding.

This sequence belongs to the FliT family. As to quaternary structure, homodimer. Interacts with FliD and FlhC.

The protein localises to the cytoplasm. It localises to the cytosol. Its function is as follows. Dual-function protein that regulates the transcription of class 2 flagellar operons and that also acts as an export chaperone for the filament-capping protein FliD. As a transcriptional regulator, acts as an anti-FlhDC factor; it directly binds FlhC, thus inhibiting the binding of the FlhC/FlhD complex to class 2 promoters, resulting in decreased expression of class 2 flagellar operons. As a chaperone, effects FliD transition to the membrane by preventing its premature polymerization, and by directing it to the export apparatus. This Escherichia coli O9:H4 (strain HS) protein is Flagellar protein FliT.